Reading from the N-terminus, the 80-residue chain is Exodeoxyribonuclease 7 small subunit (80 aa).

This sequence belongs to the XseB family. In terms of assembly, heterooligomer composed of large and small subunits.

Its subcellular location is the cytoplasm. It carries out the reaction Exonucleolytic cleavage in either 5'- to 3'- or 3'- to 5'-direction to yield nucleoside 5'-phosphates.. Bidirectionally degrades single-stranded DNA into large acid-insoluble oligonucleotides, which are then degraded further into small acid-soluble oligonucleotides. This Rickettsia bellii (strain OSU 85-389) protein is Exodeoxyribonuclease 7 small subunit.